Here is a 473-residue protein sequence, read N- to C-terminus: Protein TED1 (473 aa).

Topologically, residues 1-8 are cytoplasmic; it reads MLRCAVKK. The helical transmembrane segment at 9–29 threads the bilayer; that stretch reads FAYFATFLTIVANIYIYTYPS. The Lumenal portion of the chain corresponds to 30–451; that stretch reads FHPEQCSWNC…FSLCPFAIQH (422 aa). Asparagine 38, asparagine 147, asparagine 229, asparagine 266, and asparagine 307 each carry an N-linked (GlcNAc...) asparagine glycan. The chain crosses the membrane as a helical span at residues 452–472; sequence VWWFAKVSLLVTIFTWSSLLF. Residue valine 473 is a topological domain, cytoplasmic.

In terms of processing, N-glycosylated.

The protein resides in the endoplasmic reticulum membrane. Acts together with EMP24 and ERV25 in cargo exit from the endoplasmic reticulum. The chain is Protein TED1 (TED1) from Saccharomyces cerevisiae (strain ATCC 204508 / S288c) (Baker's yeast).